A 483-amino-acid chain; its full sequence is ATP synthase subunit beta (483 aa).

Residue 169 to 176 coordinates ATP; the sequence is GGAGVGKT.

This sequence belongs to the ATPase alpha/beta chains family. F-type ATPases have 2 components, CF(1) - the catalytic core - and CF(0) - the membrane proton channel. CF(1) has five subunits: alpha(3), beta(3), gamma(1), delta(1), epsilon(1). CF(0) has three main subunits: a(1), b(2) and c(9-12). The alpha and beta chains form an alternating ring which encloses part of the gamma chain. CF(1) is attached to CF(0) by a central stalk formed by the gamma and epsilon chains, while a peripheral stalk is formed by the delta and b chains.

Its subcellular location is the cell membrane. It catalyses the reaction ATP + H2O + 4 H(+)(in) = ADP + phosphate + 5 H(+)(out). In terms of biological role, produces ATP from ADP in the presence of a proton gradient across the membrane. The catalytic sites are hosted primarily by the beta subunits. This Rhodococcus jostii (strain RHA1) protein is ATP synthase subunit beta.